Reading from the N-terminus, the 613-residue chain is Chaperone protein DnaK (613 aa).

Positions 579–613 (MYQSASSTTQTGSGNQNSSKQENDKTVDAEYKEKS) are disordered. Positions 581–597 (QSASSTTQTGSGNQNSS) are enriched in low complexity. The span at 599-613 (QENDKTVDAEYKEKS) shows a compositional bias: basic and acidic residues.

It belongs to the heat shock protein 70 family.

In terms of biological role, acts as a chaperone. The chain is Chaperone protein DnaK from Thermoplasma volcanium (strain ATCC 51530 / DSM 4299 / JCM 9571 / NBRC 15438 / GSS1).